The sequence spans 338 residues: 2,3-dihydroxybenzoate decarboxylase (338 aa).

Residue cysteine 251 is part of the active site.

It belongs to the metallo-dependent hydrolases superfamily. In terms of assembly, homotetramer.

It catalyses the reaction 2,3-dihydroxybenzoate + H(+) = catechol + CO2. It participates in aromatic compound metabolism; benzoate degradation via hydroxylation. Functionally, has an absolute substrate specificity for 2,3-DHBA. In Aspergillus oryzae (strain ATCC 42149 / RIB 40) (Yellow koji mold), this protein is 2,3-dihydroxybenzoate decarboxylase.